The chain runs to 118 residues: uncharacterized protein (118 aa).

The disordered stretch occupies residues 49-80 (SKEEHTTSAANLHPRKKKRMPPRRAEKNKAPN). A compositionally biased stretch (basic residues) spans 61 to 70 (HPRKKKRMPP).

This is an uncharacterized protein from Saccharomyces cerevisiae (strain ATCC 204508 / S288c) (Baker's yeast).